The chain runs to 317 residues: Phospho-N-acetylmuramoyl-pentapeptide-transferase (317 aa).

Transmembrane regions (helical) follow at residues valine 3–isoleucine 23, glycine 48–methionine 68, leucine 72–isoleucine 92, phenylalanine 112–serine 132, isoleucine 141–valine 161, leucine 171–phenylalanine 191, tryptophan 193–leucine 213, alanine 238–isoleucine 258, and valine 297–isoleucine 317.

It belongs to the glycosyltransferase 4 family. MraY subfamily. Mg(2+) serves as cofactor.

Its subcellular location is the cell membrane. It catalyses the reaction UDP-N-acetyl-alpha-D-muramoyl-L-alanyl-gamma-D-glutamyl-meso-2,6-diaminopimeloyl-D-alanyl-D-alanine + di-trans,octa-cis-undecaprenyl phosphate = di-trans,octa-cis-undecaprenyl diphospho-N-acetyl-alpha-D-muramoyl-L-alanyl-D-glutamyl-meso-2,6-diaminopimeloyl-D-alanyl-D-alanine + UMP. The protein operates within cell wall biogenesis; peptidoglycan biosynthesis. Functionally, catalyzes the initial step of the lipid cycle reactions in the biosynthesis of the cell wall peptidoglycan: transfers peptidoglycan precursor phospho-MurNAc-pentapeptide from UDP-MurNAc-pentapeptide onto the lipid carrier undecaprenyl phosphate, yielding undecaprenyl-pyrophosphoryl-MurNAc-pentapeptide, known as lipid I. This Clostridium acetobutylicum (strain ATCC 824 / DSM 792 / JCM 1419 / IAM 19013 / LMG 5710 / NBRC 13948 / NRRL B-527 / VKM B-1787 / 2291 / W) protein is Phospho-N-acetylmuramoyl-pentapeptide-transferase.